Consider the following 381-residue polypeptide: Creatine kinase B-type (381 aa).

The residue at position 4 (S4) is a Phosphoserine. In terms of domain architecture, Phosphagen kinase N-terminal spans 11-98 (KLRFPAEDEF…FDPIIEDRHG (88 aa)). T35 is subject to Phosphothreonine. A Glycyl lysine isopeptide (Lys-Gly) (interchain with G-Cter in ubiquitin) cross-link involves residue K45. V72 provides a ligand contact to creatine. The span at 96–110 (RHGGYKPSDEHKTDL) shows a compositional bias: basic and acidic residues. The disordered stretch occupies residues 96-123 (RHGGYKPSDEHKTDLNPDNLQGGDDLDP). Glycyl lysine isopeptide (Lys-Gly) (interchain with G-Cter in ubiquitin) cross-links involve residues K101 and K107. Y125 carries the post-translational modification Phosphotyrosine. The Phosphagen kinase C-terminal domain occupies 125–367 (YVLSSRVRTG…KLLIEMEQRL (243 aa)). ATP contacts are provided by residues 128 to 132 (SSRVR), R130, R132, and H191. The tract at residues 130 to 138 (RVRTGRSIR) is internal MTS-like signal. A Phosphoserine modification is found at S199. Residue E232 coordinates creatine. R236 serves as a coordination point for ATP. Residue Y269 is modified to 3'-nitrotyrosine. S285 is a creatine binding site. ATP contacts are provided by residues R292, R320, 320–325 (RGTGGV), and D335. T322 is subject to Phosphothreonine. Residue K381 forms a Glycyl lysine isopeptide (Lys-Gly) (interchain with G-Cter in ubiquitin) linkage.

It belongs to the ATP:guanido phosphotransferase family. As to quaternary structure, dimer of identical or non-identical chains, which can be either B (brain type) or M (muscle type). With MM being the major form in skeletal muscle and myocardium, MB existing in myocardium, and BB existing in many tissues, especially brain. Interacts with SLC12A6 (via C-terminus); the interaction may be required for SLC12A6 potassium-chloride cotransport activity. In terms of processing, ubiquitinated by the ECS(ASB9) complex, leading to its degradation by the proteasome.

The protein localises to the cytoplasm. It is found in the cytosol. Its subcellular location is the mitochondrion. It localises to the cell membrane. It catalyses the reaction creatine + ATP = N-phosphocreatine + ADP + H(+). Functionally, reversibly catalyzes the transfer of phosphate between ATP and various phosphogens (e.g. creatine phosphate). Creatine kinase isoenzymes play a central role in energy transduction in tissues with large, fluctuating energy demands, such as skeletal muscle, heart, brain and spermatozoa. Acts as a key regulator of adaptive thermogenesis as part of the futile creatine cycle: localizes to the mitochondria of thermogenic fat cells and acts by mediating phosphorylation of creatine to initiate a futile cycle of creatine phosphorylation and dephosphorylation. During the futile creatine cycle, creatine and N-phosphocreatine are in a futile cycle, which dissipates the high energy charge of N-phosphocreatine as heat without performing any mechanical or chemical work. In Canis lupus familiaris (Dog), this protein is Creatine kinase B-type (CKB).